The sequence spans 201 residues: Segregation and condensation protein B (201 aa).

Belongs to the ScpB family. As to quaternary structure, homodimer. Homodimerization may be required to stabilize the binding of ScpA to the Smc head domains. Component of a cohesin-like complex composed of ScpA, ScpB and the Smc homodimer, in which ScpA and ScpB bind to the head domain of Smc. The presence of the three proteins is required for the association of the complex with DNA.

Its subcellular location is the cytoplasm. Its function is as follows. Participates in chromosomal partition during cell division. May act via the formation of a condensin-like complex containing Smc and ScpA that pull DNA away from mid-cell into both cell halves. The chain is Segregation and condensation protein B from Enterococcus faecalis (strain ATCC 700802 / V583).